The sequence spans 239 residues: 1-(5-phosphoribosyl)-5-[(5-phosphoribosylamino)methylideneamino] imidazole-4-carboxamide isomerase (239 aa).

Residue aspartate 9 is the Proton acceptor of the active site. Aspartate 131 serves as the catalytic Proton donor.

The protein belongs to the HisA/HisF family.

The protein localises to the cytoplasm. It catalyses the reaction 1-(5-phospho-beta-D-ribosyl)-5-[(5-phospho-beta-D-ribosylamino)methylideneamino]imidazole-4-carboxamide = 5-[(5-phospho-1-deoxy-D-ribulos-1-ylimino)methylamino]-1-(5-phospho-beta-D-ribosyl)imidazole-4-carboxamide. It functions in the pathway amino-acid biosynthesis; L-histidine biosynthesis; L-histidine from 5-phospho-alpha-D-ribose 1-diphosphate: step 4/9. This chain is 1-(5-phosphoribosyl)-5-[(5-phosphoribosylamino)methylideneamino] imidazole-4-carboxamide isomerase, found in Bacteroides fragilis (strain YCH46).